A 217-amino-acid chain; its full sequence is Adenylate kinase (217 aa).

Gly-10–Thr-15 serves as a coordination point for ATP. Positions Ser-30–Val-59 are NMP. Residues Thr-31, Arg-36, Ala-57 to Val-59, Gly-85 to Arg-88, and Gln-92 contribute to the AMP site. Positions Gly-126 to Asp-163 are LID. ATP is bound at residue Arg-127. Zn(2+)-binding residues include Cys-130, Cys-133, Cys-150, and Cys-153. AMP is bound by residues Arg-160 and Arg-171. Residue Gly-199 participates in ATP binding.

It belongs to the adenylate kinase family. In terms of assembly, monomer.

The protein resides in the cytoplasm. It carries out the reaction AMP + ATP = 2 ADP. The protein operates within purine metabolism; AMP biosynthesis via salvage pathway; AMP from ADP: step 1/1. Functionally, catalyzes the reversible transfer of the terminal phosphate group between ATP and AMP. Plays an important role in cellular energy homeostasis and in adenine nucleotide metabolism. The protein is Adenylate kinase of Geotalea uraniireducens (strain Rf4) (Geobacter uraniireducens).